Consider the following 167-residue polypeptide: Ureidoglycolate lyase (167 aa).

This sequence belongs to the ureidoglycolate lyase family. Homodimer. It depends on Ni(2+) as a cofactor.

The catalysed reaction is (S)-ureidoglycolate = urea + glyoxylate. The protein operates within nitrogen metabolism; (S)-allantoin degradation. Functionally, catalyzes the catabolism of the allantoin degradation intermediate (S)-ureidoglycolate, generating urea and glyoxylate. Involved in the utilization of allantoin as nitrogen source. The sequence is that of Ureidoglycolate lyase from Pseudomonas fluorescens (strain SBW25).